A 135-amino-acid chain; its full sequence is Lymphocyte antigen 6 complex locus protein G6d (135 aa).

Positions 1-19 are cleaved as a signal peptide; sequence MNSQLVGILLSALLGVALG. The region spanning 22–121 is the UPAR/Ly6 domain; that stretch reads TRCYDCGGGP…ASSVTPLCIL (100 aa). Intrachain disulfides connect Cys-24-Cys-48, Cys-27-Cys-35, Cys-42-Cys-76, Cys-82-Cys-101, and Cys-102-Cys-107. A glycan (O-linked (GalNAc...) threonine) is linked at Thr-68. A lipid anchor (GPI-anchor amidated asparagine) is attached at Asn-108. A propeptide spans 109-135 (removed in mature form); that stretch reads SAVASSVTPLCILAAAVTTLAWLLPGL.

Homodimer. Post-translationally, O-glycosylated. As to expression, expressed in embryonic tissue and adult lung, kidney, brain, liver and spleen.

Its subcellular location is the cell membrane. It localises to the cell projection. The protein resides in the filopodium. The sequence is that of Lymphocyte antigen 6 complex locus protein G6d (Ly6g6d) from Mus musculus (Mouse).